Consider the following 794-residue polypeptide: Copper-exporting P-type ATPase (794 aa).

2 HMA domains span residues 5-70 and 72-138; these read KKTT…YGVL and ETAE…YDAQ. Residues C16, C19, C83, and C86 each coordinate Cu(+). Transmembrane regions (helical) follow at residues 162–182, 187–207, 224–244, 250–270, 411–431, and 438–458; these read IISAVLAAPLLLTMLVHLFGI, IFMNPWFQFILATPVQFIIGW, MDVLVALGTSAAYFYSLYEMV, ANVMPHLYFETSAVLITLILF, YFVPIVVGIAVLTFIIWIAFV, and PALVAAIAVLVIACPCALGLA. D495 (4-aspartylphosphate intermediate) is an active-site residue. Residues D689 and D693 each contribute to the Mg(2+) site. 2 helical membrane-spanning segments follow: residues 747 to 766 and 770 to 789; these read LFWAFGYNVAGIPIAALGLL and IAGAAMALSSVSVVTNALRL.

Belongs to the cation transport ATPase (P-type) (TC 3.A.3) family. Type IB subfamily.

The protein resides in the cell membrane. It catalyses the reaction Cu(+)(in) + ATP + H2O = Cu(+)(out) + ADP + phosphate + H(+). Its function is as follows. Involved in copper export. This is Copper-exporting P-type ATPase (copA) from Staphylococcus saprophyticus subsp. saprophyticus (strain ATCC 15305 / DSM 20229 / NCIMB 8711 / NCTC 7292 / S-41).